A 216-amino-acid polypeptide reads, in one-letter code: Adenylate kinase (216 aa).

An ATP-binding site is contributed by G10–T15. An NMP region spans residues S30–V59. Residues T31, R36, A57–V59, G85–R88, and Q92 contribute to the AMP site. The segment at G126 to D163 is LID. Residue R127 participates in ATP binding. The Zn(2+) site is built by C130 and C133. T136–Y137 contacts ATP. C150 and C153 together coordinate Zn(2+). Residues R160 and R171 each coordinate AMP. Residue Q199 participates in ATP binding.

It belongs to the adenylate kinase family. In terms of assembly, monomer.

The protein localises to the cytoplasm. It carries out the reaction AMP + ATP = 2 ADP. It participates in purine metabolism; AMP biosynthesis via salvage pathway; AMP from ADP: step 1/1. Catalyzes the reversible transfer of the terminal phosphate group between ATP and AMP. Plays an important role in cellular energy homeostasis and in adenine nucleotide metabolism. The chain is Adenylate kinase from Bacillus cereus (strain B4264).